We begin with the raw amino-acid sequence, 184 residues long: ATP synthase subunit b, chloroplastic (184 aa).

Residues 27-49 (LATNPINLSVVLGVLIFFGKGVL) form a helical membrane-spanning segment.

This sequence belongs to the ATPase B chain family. F-type ATPases have 2 components, F(1) - the catalytic core - and F(0) - the membrane proton channel. F(1) has five subunits: alpha(3), beta(3), gamma(1), delta(1), epsilon(1). F(0) has four main subunits: a(1), b(1), b'(1) and c(10-14). The alpha and beta chains form an alternating ring which encloses part of the gamma chain. F(1) is attached to F(0) by a central stalk formed by the gamma and epsilon chains, while a peripheral stalk is formed by the delta, b and b' chains.

The protein localises to the plastid. It is found in the chloroplast thylakoid membrane. Functionally, f(1)F(0) ATP synthase produces ATP from ADP in the presence of a proton or sodium gradient. F-type ATPases consist of two structural domains, F(1) containing the extramembraneous catalytic core and F(0) containing the membrane proton channel, linked together by a central stalk and a peripheral stalk. During catalysis, ATP synthesis in the catalytic domain of F(1) is coupled via a rotary mechanism of the central stalk subunits to proton translocation. Its function is as follows. Component of the F(0) channel, it forms part of the peripheral stalk, linking F(1) to F(0). This is ATP synthase subunit b, chloroplastic from Phalaenopsis aphrodite subsp. formosana (Moth orchid).